We begin with the raw amino-acid sequence, 198 residues long: Recombination protein RecR (198 aa).

The C4-type zinc finger occupies 57–72 (CSVCGHITDRDPCYIC). The 96-residue stretch at 80-175 (SVVCVVQEPK…KVTRIAHGLP (96 aa)) folds into the Toprim domain.

The protein belongs to the RecR family.

In terms of biological role, may play a role in DNA repair. It seems to be involved in an RecBC-independent recombinational process of DNA repair. It may act with RecF and RecO. The sequence is that of Recombination protein RecR from Bacillus mycoides (strain KBAB4) (Bacillus weihenstephanensis).